Consider the following 308-residue polypeptide: Isoaspartyl peptidase/L-asparaginase (308 aa).

Met1 carries the post-translational modification N-acetylmethionine. The active-site Nucleophile is the Thr168. Residues 196–199 and 219–222 contribute to the substrate site; these read RVGD and TGHG.

This sequence belongs to the Ntn-hydrolase family. As to quaternary structure, heterodimer of an alpha and beta chain produced by autocleavage. This heterodimer may then dimerize in turn, giving rise to a heterotetramer. Post-translationally, cleaved into an alpha and beta chain by autocatalysis; this activates the enzyme. The N-terminal residue of the beta subunit is responsible for the nucleophile hydrolase activity.

It localises to the cytoplasm. It carries out the reaction L-asparagine + H2O = L-aspartate + NH4(+). It catalyses the reaction Cleavage of a beta-linked Asp residue from the N-terminus of a polypeptide.. Has both L-asparaginase and beta-aspartyl peptidase activity. May be involved in the production of L-aspartate, which can act as an excitatory neurotransmitter in some brain regions. Is highly active with L-Asp beta-methyl ester. Besides, has catalytic activity toward beta-aspartyl dipeptides and their methyl esters, including beta-L-Asp-L-Phe, beta-L-Asp-L-Phe methyl ester (aspartame), beta-L-Asp-L-Ala, beta-L-Asp-L-Leu and beta-L-Asp-L-Lys. Does not have aspartylglucosaminidase activity and is inactive toward GlcNAc-L-Asn. Likewise, has no activity toward glutamine. This Macaca fascicularis (Crab-eating macaque) protein is Isoaspartyl peptidase/L-asparaginase (ASRGL1).